The following is a 633-amino-acid chain: Probable potassium transport system protein Kup (633 aa).

Transmembrane regions (helical) follow at residues 19-39 (LGML…SPLY), 61-81 (ILAL…VLFI), 112-132 (VLVI…MITP), 148-168 (SGLE…LFLI), 179-199 (LFGP…INGI), 217-237 (FFIV…LALT), 258-278 (WFAL…ALLL), 290-310 (LLAP…ATVI), 348-368 (IYIG…VLGF), 380-400 (VAVT…MLLL), 405-425 (PVLA…FFAA), and 430-450 (IFQG…LMTT).

The protein belongs to the HAK/KUP transporter (TC 2.A.72) family.

Its subcellular location is the cell inner membrane. It catalyses the reaction K(+)(in) + H(+)(in) = K(+)(out) + H(+)(out). Transport of potassium into the cell. Likely operates as a K(+):H(+) symporter. The chain is Probable potassium transport system protein Kup from Pseudomonas fluorescens (strain ATCC BAA-477 / NRRL B-23932 / Pf-5).